We begin with the raw amino-acid sequence, 213 residues long: Redox-sensing transcriptional repressor Rex (213 aa).

A DNA-binding region (H-T-H motif) is located at residues 18-57; it reads LYYRFVNTLKSKGIDRVNSKAISEGLNIDSATIRRDFSYF. Position 92 to 97 (92 to 97) interacts with NAD(+); it reads GVGNLG.

Belongs to the transcriptional regulatory Rex family. In terms of assembly, homodimer.

Its subcellular location is the cytoplasm. Its function is as follows. Modulates transcription in response to changes in cellular NADH/NAD(+) redox state. This chain is Redox-sensing transcriptional repressor Rex, found in Staphylococcus saprophyticus subsp. saprophyticus (strain ATCC 15305 / DSM 20229 / NCIMB 8711 / NCTC 7292 / S-41).